Reading from the N-terminus, the 229-residue chain is Potassium/proton antiporter CemA (229 aa).

The next 3 helical transmembrane spans lie at 6–26 (AFIP…ISLC), 107–127 (ILHF…SFWG), and 189–209 (ILSG…KYWI).

Belongs to the CemA family.

It localises to the plastid. Its subcellular location is the chloroplast inner membrane. The enzyme catalyses K(+)(in) + H(+)(out) = K(+)(out) + H(+)(in). Its function is as follows. Contributes to K(+)/H(+) antiport activity by supporting proton efflux to control proton extrusion and homeostasis in chloroplasts in a light-dependent manner to modulate photosynthesis. Prevents excessive induction of non-photochemical quenching (NPQ) under continuous-light conditions. Indirectly promotes efficient inorganic carbon uptake into chloroplasts. This chain is Potassium/proton antiporter CemA, found in Barbarea verna (Land cress).